We begin with the raw amino-acid sequence, 344 residues long: Protein RecA (344 aa).

Glycine 65–threonine 72 provides a ligand contact to ATP.

The protein belongs to the RecA family.

The protein resides in the cytoplasm. Its function is as follows. Can catalyze the hydrolysis of ATP in the presence of single-stranded DNA, the ATP-dependent uptake of single-stranded DNA by duplex DNA, and the ATP-dependent hybridization of homologous single-stranded DNAs. It interacts with LexA causing its activation and leading to its autocatalytic cleavage. In Xanthomonas oryzae pv. oryzae (strain PXO99A), this protein is Protein RecA.